The sequence spans 156 residues: Ribosome maturation factor RimP (156 aa).

The protein belongs to the RimP family.

It is found in the cytoplasm. Its function is as follows. Required for maturation of 30S ribosomal subunits. The protein is Ribosome maturation factor RimP of Shouchella clausii (strain KSM-K16) (Alkalihalobacillus clausii).